We begin with the raw amino-acid sequence, 195 residues long: Acireductone dioxygenase 2 (195 aa).

Fe(2+)-binding residues include H94, H96, E100, and H139. Ni(2+) is bound by residues H94, H96, E100, and H139.

Belongs to the acireductone dioxygenase (ARD) family. It depends on Fe(2+) as a cofactor. Ni(2+) is required as a cofactor.

The protein localises to the cytoplasm. It is found in the nucleus. It carries out the reaction 1,2-dihydroxy-5-(methylsulfanyl)pent-1-en-3-one + O2 = 4-methylsulfanyl-2-oxobutanoate + formate + 2 H(+). It catalyses the reaction 1,2-dihydroxy-5-(methylsulfanyl)pent-1-en-3-one + O2 = 3-(methylsulfanyl)propanoate + CO + formate + 2 H(+). It participates in amino-acid biosynthesis; L-methionine biosynthesis via salvage pathway; L-methionine from S-methyl-5-thio-alpha-D-ribose 1-phosphate: step 5/6. Functionally, catalyzes 2 different reactions between oxygen and the acireductone 1,2-dihydroxy-3-keto-5-methylthiopentene (DHK-MTPene) depending upon the metal bound in the active site. Fe-containing acireductone dioxygenase (Fe-ARD) produces formate and 2-keto-4-methylthiobutyrate (KMTB), the alpha-ketoacid precursor of methionine in the methionine recycle pathway. Ni-containing acireductone dioxygenase (Ni-ARD) produces methylthiopropionate, carbon monoxide and formate, and does not lie on the methionine recycle pathway. The sequence is that of Acireductone dioxygenase 2 from Physcomitrium patens (Spreading-leaved earth moss).